The sequence spans 400 residues: Phosphoglycerate kinase (400 aa).

Residues 23-25, Arg-38, 61-64, Arg-120, and Arg-153 each bind substrate; these read DLN and HFGR. Residues Lys-203, Glu-325, and 355 to 358 each bind ATP; that span reads GGDT.

Belongs to the phosphoglycerate kinase family. In terms of assembly, monomer.

It is found in the cytoplasm. The catalysed reaction is (2R)-3-phosphoglycerate + ATP = (2R)-3-phospho-glyceroyl phosphate + ADP. The protein operates within carbohydrate degradation; glycolysis; pyruvate from D-glyceraldehyde 3-phosphate: step 2/5. The protein is Phosphoglycerate kinase of Rhizobium leguminosarum bv. trifolii (strain WSM2304).